Reading from the N-terminus, the 273-residue chain is Large ribosomal subunit protein uL2 (273 aa).

Residues 221–263 (RGTAMNPVDHPHGGGEGRNFGKHPVTPWGVQTKGKKTRHNKRT) are disordered. Over residues 253–263 (KGKKTRHNKRT) the composition is skewed to basic residues.

The protein belongs to the universal ribosomal protein uL2 family. As to quaternary structure, part of the 50S ribosomal subunit. Forms a bridge to the 30S subunit in the 70S ribosome.

In terms of biological role, one of the primary rRNA binding proteins. Required for association of the 30S and 50S subunits to form the 70S ribosome, for tRNA binding and peptide bond formation. It has been suggested to have peptidyltransferase activity; this is somewhat controversial. Makes several contacts with the 16S rRNA in the 70S ribosome. The protein is Large ribosomal subunit protein uL2 of Histophilus somni (strain 2336) (Haemophilus somnus).